The following is a 198-amino-acid chain: Superoxide dismutase [Mn], mitochondrial (198 aa).

Residue His-26 participates in Mn(2+) binding. Tyr-34 is subject to 3'-nitrotyrosine. 2 positions are modified to N6-acetyllysine; alternate: Lys-44 and Lys-51. Lys-44 and Lys-51 each carry N6-succinyllysine; alternate. Residue His-74 participates in Mn(2+) binding. An N6-acetyllysine modification is found at Lys-90. N6-acetyllysine; alternate occurs at positions 98 and 106. N6-succinyllysine; alternate is present on residues Lys-98 and Lys-106. Asp-159 and His-163 together coordinate Mn(2+). At Lys-178 the chain carries N6-acetyllysine.

It belongs to the iron/manganese superoxide dismutase family. Homotetramer. Requires Mn(2+) as cofactor. Nitrated under oxidative stress. Nitration coupled with oxidation inhibits the catalytic activity. Post-translationally, acetylation at Lys-98 decreases enzymatic activity. Deacetylated by SIRT3 upon exposure to ionizing radiations or after long fasting. In terms of processing, polyubiquitinated; leading to proteasomal degradation. Deubiquitinated by USP36 which increases protein stability.

It localises to the mitochondrion matrix. The catalysed reaction is 2 superoxide + 2 H(+) = H2O2 + O2. Destroys superoxide anion radicals which are normally produced within the cells and which are toxic to biological systems. This is Superoxide dismutase [Mn], mitochondrial (SOD2) from Hylobates lar (Lar gibbon).